The primary structure comprises 437 residues: Putrescine hydroxycinnamoyltransferase 3 (437 aa).

Catalysis depends on proton acceptor residues His151 and Asp383.

The protein belongs to the plant acyltransferase family. As to expression, highly expressed in roots. Expressed at low levels in shoots and flowers.

Hydroxycinnamoyl transferase that catalyzes the transfer of an acyl from p-coumaryol-CoA to putrescine, to produce coumaroyl putrescine. Can use feruloyl-CoA and caffeoyl-CoA as acyl donors. The chain is Putrescine hydroxycinnamoyltransferase 3 from Oryza sativa subsp. japonica (Rice).